The primary structure comprises 415 residues: Secernin-2 (415 aa).

The active site involves C8.

The protein belongs to the peptidase C69 family. Secernin subfamily.

The sequence is that of Secernin-2 (scrn2) from Danio rerio (Zebrafish).